Here is a 410-residue protein sequence, read N- to C-terminus: Multifunctional CCA protein (410 aa).

Residues Gly8 and Arg11 each coordinate ATP. Gly8 and Arg11 together coordinate CTP. Mg(2+) contacts are provided by Asp21 and Asp23. Arg91, Arg137, and Arg140 together coordinate ATP. 3 residues coordinate CTP: Arg91, Arg137, and Arg140. Positions 228–329 constitute an HD domain; it reads TGVHVLSVLQ…LELLQSFDVY (102 aa).

The protein belongs to the tRNA nucleotidyltransferase/poly(A) polymerase family. Bacterial CCA-adding enzyme type 1 subfamily. Monomer. Can also form homodimers and oligomers. Mg(2+) is required as a cofactor. Ni(2+) serves as cofactor.

It catalyses the reaction a tRNA precursor + 2 CTP + ATP = a tRNA with a 3' CCA end + 3 diphosphate. The catalysed reaction is a tRNA with a 3' CCA end + 2 CTP + ATP = a tRNA with a 3' CCACCA end + 3 diphosphate. Catalyzes the addition and repair of the essential 3'-terminal CCA sequence in tRNAs without using a nucleic acid template. Adds these three nucleotides in the order of C, C, and A to the tRNA nucleotide-73, using CTP and ATP as substrates and producing inorganic pyrophosphate. tRNA 3'-terminal CCA addition is required both for tRNA processing and repair. Also involved in tRNA surveillance by mediating tandem CCA addition to generate a CCACCA at the 3' terminus of unstable tRNAs. While stable tRNAs receive only 3'-terminal CCA, unstable tRNAs are marked with CCACCA and rapidly degraded. The protein is Multifunctional CCA protein of Pseudomonas aeruginosa (strain ATCC 15692 / DSM 22644 / CIP 104116 / JCM 14847 / LMG 12228 / 1C / PRS 101 / PAO1).